Reading from the N-terminus, the 171-residue chain is Putative antiporter subunit mnhG2 (171 aa).

Helical transmembrane passes span 11–31 (IAALLIFLGSIIAVISAIGIV), 51–71 (VLLTLVGVLIYFTNEQSFFSV), and 72–92 (RLLLSIVFINLTSPVGMHLVA). A compositionally biased stretch (basic and acidic residues) spans 144-156 (DVQKQRQKEKQQE). A disordered region spans residues 144–171 (DVQKQRQKEKQQEENIESLSEARRETKD).

Belongs to the CPA3 antiporters (TC 2.A.63) subunit G family. As to quaternary structure, may form a heterooligomeric complex that consists of seven subunits: mnhA2, mnhB2, mnhC2, mnhD2, mnhE2, mnhF2 and mnhG2.

The protein localises to the cell membrane. This is Putative antiporter subunit mnhG2 (mnhG2) from Staphylococcus haemolyticus (strain JCSC1435).